Consider the following 125-residue polypeptide: Large ribosomal subunit protein bL12 (125 aa).

Belongs to the bacterial ribosomal protein bL12 family. As to quaternary structure, homodimer. Part of the ribosomal stalk of the 50S ribosomal subunit. Forms a multimeric L10(L12)X complex, where L10 forms an elongated spine to which 2 to 4 L12 dimers bind in a sequential fashion. Binds GTP-bound translation factors.

Forms part of the ribosomal stalk which helps the ribosome interact with GTP-bound translation factors. Is thus essential for accurate translation. The polypeptide is Large ribosomal subunit protein bL12 (Campylobacter curvus (strain 525.92)).